The chain runs to 993 residues: UPF0182 protein MAV_4137 (993 aa).

Transmembrane regions (helical) follow at residues I18 to D38, F63 to V83, L113 to Y133, F175 to I195, I210 to D230, A254 to F274, and I287 to V307. The interval N903 to G941 is disordered. Residues S929–P939 show a composition bias toward pro residues.

This sequence belongs to the UPF0182 family.

The protein resides in the cell membrane. This chain is UPF0182 protein MAV_4137, found in Mycobacterium avium (strain 104).